A 519-amino-acid chain; its full sequence is Cytochrome P450 4A11 (519 aa).

Positions 1–4 (MSVS) are excised as a propeptide. Position 321 (Glu321) interacts with heme. Ser440 carries the phosphoserine modification. Cys457 lines the heme pocket.

The protein belongs to the cytochrome P450 family. Requires heme as cofactor. Expressed in liver. Expressed in S2 and S3 segments of proximal tubules in cortex and outer medulla of kidney.

The protein localises to the endoplasmic reticulum membrane. It localises to the microsome membrane. The catalysed reaction is an organic molecule + reduced [NADPH--hemoprotein reductase] + O2 = an alcohol + oxidized [NADPH--hemoprotein reductase] + H2O + H(+). It carries out the reaction an omega-methyl-long-chain fatty acid + reduced [NADPH--hemoprotein reductase] + O2 = an omega-hydroxy-long-chain fatty acid + oxidized [NADPH--hemoprotein reductase] + H2O + H(+). It catalyses the reaction dodecanoate + reduced [NADPH--hemoprotein reductase] + O2 = 12-hydroxydodecanoate + oxidized [NADPH--hemoprotein reductase] + H2O + H(+). The enzyme catalyses tetradecanoate + reduced [NADPH--hemoprotein reductase] + O2 = 14-hydroxytetradecanoate + oxidized [NADPH--hemoprotein reductase] + H2O + H(+). The catalysed reaction is hexadecanoate + reduced [NADPH--hemoprotein reductase] + O2 = 16-hydroxyhexadecanoate + oxidized [NADPH--hemoprotein reductase] + H2O + H(+). It carries out the reaction (9Z)-octadecenoate + reduced [NADPH--hemoprotein reductase] + O2 = 18-hydroxy-(9Z)-octadecenoate + oxidized [NADPH--hemoprotein reductase] + H2O + H(+). It catalyses the reaction (5Z,8Z,11Z,14Z)-eicosatetraenoate + reduced [NADPH--hemoprotein reductase] + O2 = 20-hydroxy-(5Z,8Z,11Z,14Z)-eicosatetraenoate + oxidized [NADPH--hemoprotein reductase] + H2O + H(+). The enzyme catalyses 22-hydroxydocosanoate + reduced [NADPH--hemoprotein reductase] + O2 = 22-oxodocosanoate + oxidized [NADPH--hemoprotein reductase] + 2 H2O + H(+). The catalysed reaction is 22-oxodocosanoate + reduced [NADPH--hemoprotein reductase] + O2 = docosanedioate + oxidized [NADPH--hemoprotein reductase] + H2O + 2 H(+). It carries out the reaction (9R,10S)-epoxy-octadecanoate + reduced [NADPH--hemoprotein reductase] + O2 = 18-hydroxy-(9R,10S)-epoxy-octadecanoate + oxidized [NADPH--hemoprotein reductase] + H2O + H(+). It catalyses the reaction 3-hydroxyhexadecanoate + reduced [NADPH--hemoprotein reductase] + O2 = 3,16-dihydroxyhexadecanoate + oxidized [NADPH--hemoprotein reductase] + H2O + H(+). The protein operates within lipid metabolism; arachidonate metabolism. Its pathway is lipid metabolism; oxylipin biosynthesis. Its activity is regulated as follows. Activated by cytochrome b5. In terms of biological role, a cytochrome P450 monooxygenase involved in the metabolism of fatty acids and their oxygenated derivatives (oxylipins). Mechanistically, uses molecular oxygen inserting one oxygen atom into a substrate, and reducing the second into a water molecule, with two electrons provided by NADPH via cytochrome P450 reductase (CPR; NADPH-ferrihemoprotein reductase). Catalyzes predominantly the oxidation of the terminal carbon (omega-oxidation) of saturated and unsaturated fatty acids, the catalytic efficiency decreasing in the following order: dodecanoic &gt; tetradecanoic &gt; (9Z)-octadecenoic &gt; (9Z,12Z)-octadecadienoic &gt; hexadecanoic acid. Acts as a major omega-hydroxylase for dodecanoic (lauric) acid in liver. Participates in omega-hydroxylation of (5Z,8Z,11Z,14Z)-eicosatetraenoic acid (arachidonate) to 20-hydroxyeicosatetraenoic acid (20-HETE), a signaling molecule acting both as vasoconstrictive and natriuretic with overall effect on arterial blood pressure. Can also catalyze the oxidation of the penultimate carbon (omega-1 oxidation) of fatty acids with lower efficiency. May contribute to the degradation of saturated very long-chain fatty acids (VLCFAs) such as docosanoic acid, by catalyzing successive omega-oxidations to the corresponding dicarboxylic acid, thereby initiating chain shortening. Omega-hydroxylates (9R,10S)-epoxy-octadecanoate stereoisomer. Plays a minor role in omega-oxidation of long-chain 3-hydroxy fatty acids. Has little activity toward prostaglandins A1 and E1. The protein is Cytochrome P450 4A11 of Homo sapiens (Human).